Reading from the N-terminus, the 329-residue chain is Protein RecA (329 aa).

63 to 70 (GNESSGKT) contributes to the ATP binding site.

It belongs to the RecA family.

It is found in the cytoplasm. In terms of biological role, can catalyze the hydrolysis of ATP in the presence of single-stranded DNA, the ATP-dependent uptake of single-stranded DNA by duplex DNA, and the ATP-dependent hybridization of homologous single-stranded DNAs. It interacts with LexA causing its activation and leading to its autocatalytic cleavage. The protein is Protein RecA of Malacoplasma penetrans (strain HF-2) (Mycoplasma penetrans).